Reading from the N-terminus, the 185-residue chain is UPF0397 protein lhv_0999 (185 aa).

The next 5 membrane-spanning stretches (helical) occupy residues 11–31, 45–65, 72–92, 111–131, and 145–165; these read VVAM…TSIP, FLAL…GFIG, IMYG…GLII, ILLF…VVAP, and VFVQ…VVGT.

It belongs to the UPF0397 family.

It localises to the cell membrane. The chain is UPF0397 protein lhv_0999 from Lactobacillus helveticus (strain DPC 4571).